A 233-amino-acid polypeptide reads, in one-letter code: Ribosomal RNA small subunit methyltransferase G (233 aa).

The tract at residues 1-25 (MASRQSPMAVSQPDHADRSAALQLT) is disordered. S-adenosyl-L-methionine contacts are provided by glycine 85, phenylalanine 90, and arginine 155.

This sequence belongs to the methyltransferase superfamily. RNA methyltransferase RsmG family.

The protein localises to the cytoplasm. It carries out the reaction guanosine(527) in 16S rRNA + S-adenosyl-L-methionine = N(7)-methylguanosine(527) in 16S rRNA + S-adenosyl-L-homocysteine. Its function is as follows. Specifically methylates the N7 position of guanine in position 527 of 16S rRNA. This chain is Ribosomal RNA small subunit methyltransferase G, found in Rhodopseudomonas palustris (strain BisB5).